Consider the following 448-residue polypeptide: Phosphoglucosamine mutase (448 aa).

Residue S100 is the Phosphoserine intermediate of the active site. Residues S100, D240, D242, and D244 each coordinate Mg(2+). S100 is subject to Phosphoserine.

Belongs to the phosphohexose mutase family. The cofactor is Mg(2+). Activated by phosphorylation.

It catalyses the reaction alpha-D-glucosamine 1-phosphate = D-glucosamine 6-phosphate. In terms of biological role, catalyzes the conversion of glucosamine-6-phosphate to glucosamine-1-phosphate. The chain is Phosphoglucosamine mutase from Bacillus cereus (strain G9842).